The primary structure comprises 400 residues: NAD-dependent protein deacetylase sirtuin-7 (400 aa).

The tract at residues 1-28 is disordered; the sequence is MAAGGLSRSERKAAERVRRLREEQQRER. Residues 8-28 show a composition bias toward basic and acidic residues; it reads RSERKAAERVRRLREEQQRER. The region spanning 82-329 is the Deacetylase sirtuin-type domain; sequence PEELQRKVRE…QLLMDELGLE (248 aa). NAD(+) is bound by residues 107-126 and 167-170; these read GAGI…NGVW and QNCD. His-187 (proton acceptor) is an active-site residue. Cys-195, Cys-198, Cys-225, and Cys-228 together coordinate Zn(2+). NAD(+) contacts are provided by residues 268 to 270, 297 to 299, and Cys-315; these read GSS and NLQ. The disordered stretch occupies residues 354-380; the sequence is SHSRKSLCRSREEPGPGDRGAPLSSAP. Arg-388 bears the Asymmetric dimethylarginine; alternate mark. Arg-388 carries the post-translational modification Omega-N-methylarginine; alternate.

Belongs to the sirtuin family. Class IV subfamily. Interacts with UBTF and the RNA polymerase I complex. Interacts with components of the B-WICH complex, such as MYBBP1A, SMARCA5/SNF2H and BAZ1B/WSTF. Interacts with ELK4, leading to stabilization at target promoters for H3K18Ac deacetylation. Interacts with histone H2A and/or histone H2B. Interacts with DNMT1. Interacts with SIRT1. Zn(2+) is required as a cofactor. In terms of processing, phosphorylated during mitosis. Methylation at Arg-388 by PRMT6 inhibits the H3K18Ac histone deacetylase activity, promoting mitochondria biogenesis and maintaining mitochondria respiration. Post-translationally, ubiquitinated via 'Lys-63'-linked ubiquitin chains. Deubiquitinated by USP7, inhibiting the H3K18Ac histone deacetylase activity and regulating gluconeogenesis. Ubiquitinated by E3 ubiquitin-protein ligase complex containing FBXO7; leading to proteasomal degradation.

It is found in the nucleus. Its subcellular location is the nucleolus. The protein resides in the nucleoplasm. It localises to the chromosome. The protein localises to the cytoplasm. The catalysed reaction is N(6)-acetyl-L-lysyl-[protein] + NAD(+) + H2O = 2''-O-acetyl-ADP-D-ribose + nicotinamide + L-lysyl-[protein]. The enzyme catalyses N(6)-glutaryl-L-lysyl-[protein] + NAD(+) + H2O = 2''-O-glutaryl-ADP-D-ribose + nicotinamide + L-lysyl-[protein]. It catalyses the reaction N(6)-succinyl-L-lysyl-[protein] + NAD(+) + H2O = 2''-O-succinyl-ADP-D-ribose + nicotinamide + L-lysyl-[protein]. It carries out the reaction N(6)-propanoyl-L-lysyl-[protein] + NAD(+) + H2O = 3''-O-propanoyl-ADP-D-ribose + nicotinamide + L-lysyl-[protein]. The catalysed reaction is N(6)-decanoyl-L-lysyl-[protein] + NAD(+) + H2O = 2''-O-decanoyl-ADP-D-ribose + nicotinamide + L-lysyl-[protein]. Its activity is regulated as follows. NAD-dependent protein-lysine deacetylase and deacylase activities are activated by nucleic acids. Histone deacetylase activity is activated by DNA. Protein-lysine deacylase activity is activated by RNA. H3K18Ac histone deacetylase activity is inhibited by methylation at Arg-388. H3K18Ac histone deacetylase activity is inhibited by deubiquitination by USP7. In terms of biological role, NAD-dependent protein-lysine deacylase that can act both as a deacetylase or deacylase (desuccinylase, depropionylase, deglutarylase and dedecanoylase), depending on the context. Specifically mediates deacetylation of histone H3 at 'Lys-18' (H3K18Ac). In contrast to other histone deacetylases, displays strong preference for a specific histone mark, H3K18Ac, directly linked to control of gene expression. H3K18Ac is mainly present around the transcription start site of genes and has been linked to activation of nuclear hormone receptors; SIRT7 thereby acts as a transcription repressor. Moreover, H3K18 hypoacetylation has been reported as a marker of malignancy in various cancers and seems to maintain the transformed phenotype of cancer cells. Also able to mediate deacetylation of histone H3 at 'Lys-36' (H3K36Ac) in the context of nucleosomes. Also mediates deacetylation of non-histone proteins, such as ATM, CDK9, DDX21, DDB1, FBL, FKBP5/FKBP51, GABPB1, RAN, RRP9/U3-55K and POLR1E/PAF53. Enriched in nucleolus where it stimulates transcription activity of the RNA polymerase I complex. Acts by mediating the deacetylation of the RNA polymerase I subunit POLR1E/PAF53, thereby promoting the association of RNA polymerase I with the rDNA promoter region and coding region. In response to metabolic stress, SIRT7 is released from nucleoli leading to hyperacetylation of POLR1E/PAF53 and decreased RNA polymerase I transcription. Required to restore the transcription of ribosomal RNA (rRNA) at the exit from mitosis. Promotes pre-ribosomal RNA (pre-rRNA) cleavage at the 5'-terminal processing site by mediating deacetylation of RRP9/U3-55K, a core subunit of the U3 snoRNP complex. Mediates 'Lys-37' deacetylation of Ran, thereby regulating the nuclear export of NF-kappa-B subunit RELA/p65. Acts as a regulator of DNA damage repair by mediating deacetylation of ATM during the late stages of DNA damage response, promoting ATM dephosphorylation and deactivation. Suppresses the activity of the DCX (DDB1-CUL4-X-box) E3 ubiquitin-protein ligase complexes by mediating deacetylation of DDB1, which prevents the interaction between DDB1 and CUL4 (CUL4A or CUL4B). Activates RNA polymerase II transcription by mediating deacetylation of CDK9, thereby promoting 'Ser-2' phosphorylation of the C-terminal domain (CTD) of RNA polymerase II. Deacetylates FBL, promoting histone-glutamine methyltransferase activity of FBL. Acts as a regulator of mitochondrial function by catalyzing deacetylation of GABPB1. Regulates Akt/AKT1 activity by mediating deacetylation of FKBP5/FKBP51. Required to prevent R-loop-associated DNA damage and transcription-associated genomic instability by mediating deacetylation and subsequent activation of DDX21, thereby overcoming R-loop-mediated stalling of RNA polymerases. In addition to protein deacetylase activity, also acts as a protein-lysine deacylase. Acts as a protein depropionylase by mediating depropionylation of Osterix (SP7), thereby regulating bone formation by osteoblasts. Acts as a histone deglutarylase by mediating deglutarylation of histone H4 on 'Lys-91' (H4K91glu); a mark that destabilizes nucleosomes by promoting dissociation of the H2A-H2B dimers from nucleosomes. Acts as a histone desuccinylase: in response to DNA damage, recruited to DNA double-strand breaks (DSBs) and catalyzes desuccinylation of histone H3 on 'Lys-122' (H3K122succ), thereby promoting chromatin condensation and DSB repair. Also promotes DSB repair by promoting H3K18Ac deacetylation, regulating non-homologous end joining (NHEJ). Along with its role in DNA repair, required for chromosome synapsis during prophase I of female meiosis by catalyzing H3K18Ac deacetylation. Involved in transcriptional repression of LINE-1 retrotransposon via H3K18Ac deacetylation, and promotes their association with the nuclear lamina. Required to stabilize ribosomal DNA (rDNA) heterochromatin and prevent cellular senescence induced by rDNA instability. Acts as a negative regulator of SIRT1 by preventing autodeacetylation of SIRT1, restricting SIRT1 deacetylase activity. The protein is NAD-dependent protein deacetylase sirtuin-7 (SIRT7) of Bos taurus (Bovine).